The following is a 243-amino-acid chain: PF03932 family protein CutC (243 aa).

It belongs to the CutC family.

It is found in the cytoplasm. The sequence is that of PF03932 family protein CutC from Parabacteroides distasonis (strain ATCC 8503 / DSM 20701 / CIP 104284 / JCM 5825 / NCTC 11152).